Here is a 46-residue protein sequence, read N- to C-terminus: MTPQGNKPSSHDVITGRWTPSDADRAAGRVSGFGVITNIINGGLDC.

A disordered region spans residues 1-21 (MTPQGNKPSSHDVITGRWTPS).

It belongs to the glycosyl hydrolase 19 family. Chitinase class I subfamily.

It carries out the reaction Random endo-hydrolysis of N-acetyl-beta-D-glucosaminide (1-&gt;4)-beta-linkages in chitin and chitodextrins.. Defense against chitin-containing fungal and bacterial pathogens. The polypeptide is Endochitinase 3 (Arachis hypogaea (Peanut)).